A 427-amino-acid chain; its full sequence is NAD kinase 2, mitochondrial (427 aa).

Residues 1–33 (MSLCLRLLCSVCGAAALRVPLGVSSLRALSGSA) constitute a mitochondrion transit peptide.

This sequence belongs to the NAD kinase family. In terms of assembly, homodimer.

Its subcellular location is the mitochondrion. The catalysed reaction is NAD(+) + ATP = ADP + NADP(+) + H(+). Functionally, mitochondrial NAD(+) kinase that phosphorylates NAD(+) to yield NADP(+). Can use both ATP or inorganic polyphosphate as the phosphoryl donor. The polypeptide is NAD kinase 2, mitochondrial (nadk2) (Xenopus tropicalis (Western clawed frog)).